The following is a 489-amino-acid chain: Male-specific lethal 1-like 1 (489 aa).

Disordered stretches follow at residues 126 to 164 and 224 to 311; these read PMVS…VRKG and VKKD…EDMQ. A coiled-coil region spans residues 179–227; that stretch reads LLLQLELIEQQQKHLHNKNKEIEDLKAEKEMLMARIERMEHRLQMVKKD. In terms of domain architecture, PEHE spans 347–466; sequence TVEVPSWRES…LKQQDFDLPW (120 aa). The interaction with KAT8 HAT domain stretch occupies residues 371–389; sequence ECLDDSVFLKRHSKLELDE. The short motif at 380–394 is the Bipartite nuclear localization signal element; it reads KRHSKLELDEKRRKR.

It belongs to the msl-1 family. Component of a multisubunit histone acetyltransferase complex (MSL). Interacts (via PEHE domain) with KAT8 (via HAT domain) and MSL3 (via MRG domain); both interactions are direct.

Its subcellular location is the nucleus. It is found in the nucleoplasm. It localises to the nucleus speckle. Its function is as follows. Component of histone acetyltransferase complex. Within MSL complex, promotes ubiquitination of histone H2B. In Danio rerio (Zebrafish), this protein is Male-specific lethal 1-like 1 (msl1l1).